The following is a 238-amino-acid chain: Sugar fermentation stimulation protein homolog (238 aa).

It belongs to the SfsA family.

This chain is Sugar fermentation stimulation protein homolog, found in Haemophilus influenzae (strain ATCC 51907 / DSM 11121 / KW20 / Rd).